The following is a 175-amino-acid chain: Endoribonuclease YbeY (175 aa).

H121, H125, and H131 together coordinate Zn(2+). Residues 154 to 175 (PDPYSPAQQESQAQPENTELNP) are disordered. Polar residues predominate over residues 159–175 (PAQQESQAQPENTELNP).

Belongs to the endoribonuclease YbeY family. It depends on Zn(2+) as a cofactor.

It is found in the cytoplasm. In terms of biological role, single strand-specific metallo-endoribonuclease involved in late-stage 70S ribosome quality control and in maturation of the 3' terminus of the 16S rRNA. The polypeptide is Endoribonuclease YbeY (Alcanivorax borkumensis (strain ATCC 700651 / DSM 11573 / NCIMB 13689 / SK2)).